A 534-amino-acid chain; its full sequence is 26S proteasome non-ATPase regulatory subunit 3 (534 aa).

Over residues 1–16 (MKQEGSARRRGADKAK) the composition is skewed to basic and acidic residues. Residues 1–68 (MKQEGSARRR…AAEHSQRELD (68 aa)) are disordered. A compositionally biased stretch (pro residues) spans 17–32 (PPPGGGEQEPPPPPAP). Lys-38 participates in a covalent cross-link: Glycyl lysine isopeptide (Lys-Gly) (interchain with G-Cter in SUMO1); alternate. Residue Lys-38 forms a Glycyl lysine isopeptide (Lys-Gly) (interchain with G-Cter in SUMO2); alternate linkage. The segment covering 49–61 (GETAGKTAAAAAE) has biased composition (low complexity). One can recognise a PCI domain in the interval 286–465 (ARYLYYTGRI…GYVQSKEMID (180 aa)). A phosphoserine mark is found at Ser-418 and Ser-430. The interval 500-534 (SYNKDLESAEERREREQQDLEFAKEMAEDDDDSFP) is disordered. Positions 501–525 (YNKDLESAEERREREQQDLEFAKEM) are enriched in basic and acidic residues.

Belongs to the proteasome subunit S3 family. As to quaternary structure, component of the 19S proteasome regulatory particle complex. The 26S proteasome consists of a 20S core particle (CP) and two 19S regulatory subunits (RP). The regulatory particle is made of a lid composed of 9 subunits including PSMD3, a base containing 6 ATPases and few additional components. Interacts with UBQLN1 (via ubiquitin-like domain). Interacts with ERCC6.

In terms of biological role, component of the 26S proteasome, a multiprotein complex involved in the ATP-dependent degradation of ubiquitinated proteins. This complex plays a key role in the maintenance of protein homeostasis by removing misfolded or damaged proteins, which could impair cellular functions, and by removing proteins whose functions are no longer required. Therefore, the proteasome participates in numerous cellular processes, including cell cycle progression, apoptosis, or DNA damage repair. This is 26S proteasome non-ATPase regulatory subunit 3 (PSMD3) from Bos taurus (Bovine).